The sequence spans 328 residues: Malate dehydrogenase (328 aa).

12 to 18 (GAAGQIG) is an NAD(+) binding site. Substrate-binding residues include Arg-95 and Arg-101. Residues Asn-108, Gln-115, and 132–134 (VGN) contribute to the NAD(+) site. Residues Asn-134 and Arg-165 each coordinate substrate. The Proton acceptor role is filled by His-190.

Belongs to the LDH/MDH superfamily. MDH type 2 family.

The enzyme catalyses (S)-malate + NAD(+) = oxaloacetate + NADH + H(+). Its function is as follows. Catalyzes the reversible oxidation of malate to oxaloacetate. The protein is Malate dehydrogenase of Leptothrix cholodnii (strain ATCC 51168 / LMG 8142 / SP-6) (Leptothrix discophora (strain SP-6)).